The chain runs to 272 residues: MGYFLKLYAYVNSHSLFVWVCDRSYKRSFRPMILNKIKELSRNQFSTMSHLRKDSQPSSPGDDAMDRSGLPDLQGRFELSGKNRQYPLDALEPQPSIGDIKDIKKAAKSMLDPAHKSHFHPVTPSLVFLCFIFDGLHQALLSVGVSKRSNTVVGNENEERGTPYASRFKDMPNFIALEKSSVLRHCCDLLIGIAAGSSDKICTSSLQVQRRFKAMMASIGRLSHGESADLLISCNAESAIGWISSRPWVGELMFTLLFGDFESPLHKLRKSS.

The interval 48 to 70 (MSHLRKDSQPSSPGDDAMDRSGL) is disordered.

Its function is as follows. May act as an RNA-binding protein. The C-terminal region is highly homologous to the bornavirus nucleocapsid N protein that binds viral RNA and oligomerizes. The viral protein also possesses a nuclear import and a nuclear export signal. These 2 signals seem absent in EBLN-2 supporting an unrelated function in Human. This Homo sapiens (Human) protein is Endogenous Bornavirus-like nucleoprotein 2 (EBLN2).